The primary structure comprises 416 residues: Phosphoglycerate kinase (416 aa).

N-acetylserine is present on S2. The (2R)-3-phosphoglycerate site is built by V23, D24, F25, N26, Q38, R39, S62, H63, G65, and R66. Residue K82 forms a Glycyl lysine isopeptide (Lys-Gly) (interchain with G-Cter in ubiquitin) linkage. The residue at position 93 (T93) is a Phosphothreonine. S110 bears the Phosphoserine mark. Residues L121 and R122 each contribute to the (2R)-3-phosphoglycerate site. Phosphoserine is present on residues S130 and S154. Residues H168 and R169 each coordinate (2R)-3-phosphoglycerate. Position 172 is a phosphoserine (S172). K197 participates in a covalent cross-link: Glycyl lysine isopeptide (Lys-Gly) (interchain with G-Cter in ubiquitin). Position 203 is a phosphothreonine (T203). G212 is an ADP binding site. G212 provides a ligand contact to CDP. 2 residues coordinate AMP: A213 and K214. A213 and K214 together coordinate ATP. A213 is a binding site for Mg(2+). The Mg(2+) site is built by A216 and D217. Residue D217 coordinates CDP. An AMP-binding site is contributed by K218. K218 lines the ATP pocket. G236 is a binding site for ADP. Position 236 (G236) interacts with CDP. G237 serves as a coordination point for AMP. An ATP-binding site is contributed by G237. T241 is modified (phosphothreonine). Glycyl lysine isopeptide (Lys-Gly) (interchain with G-Cter in ubiquitin) cross-links involve residues K258 and K274. T298 carries the post-translational modification Phosphothreonine. A Glycyl lysine isopeptide (Lys-Gly) (interchain with G-Cter in ubiquitin) cross-link involves residue K302. G311 lines the AMP pocket. The ATP site is built by G311 and L312. S318 carries the phosphoserine modification. Phosphothreonine is present on T331. N335 is a binding site for ATP. The CDP site is built by G336 and F341. F341 provides a ligand contact to ADP. Residue E342 participates in AMP binding. E342 is an ATP binding site. G371 is a (2R)-3-phosphoglycerate binding site. ATP is bound by residues D373 and T374. Position 373 (D373) interacts with Mg(2+). T392 carries the phosphothreonine modification. Positions 394 and 395 each coordinate (2R)-3-phosphoglycerate.

Belongs to the phosphoglycerate kinase family. Monomer. Requires Mg(2+) as cofactor.

The protein resides in the cytoplasm. Its subcellular location is the mitochondrion. The enzyme catalyses (2R)-3-phosphoglycerate + ATP = (2R)-3-phospho-glyceroyl phosphate + ADP. Its pathway is carbohydrate degradation; glycolysis; pyruvate from D-glyceraldehyde 3-phosphate: step 2/5. Functionally, catalyzes one of the two ATP producing reactions in the glycolytic pathway via the reversible conversion of 1,3-diphosphoglycerate to 3-phosphoglycerate. Both L- and D- forms of purine and pyrimidine nucleotides can be used as substrates, but the activity is much lower on pyrimidines. Negatively regulates the biosynthesis of acetyl-CoA from pyruvate in the mitochondrion. The protein is Phosphoglycerate kinase (PGK1) of Saccharomyces cerevisiae (strain ATCC 204508 / S288c) (Baker's yeast).